A 128-amino-acid polypeptide reads, in one-letter code: Modulator protein MzrA (128 aa).

Residues 1–13 (MLALLRPYLSTRV) lie on the Cytoplasmic side of the membrane. Residues 14–34 (LCVLVVCFSALMLVAFIPTLF) form a helical membrane-spanning segment. Over 35–128 (RNDTALQIRA…RLSLRKQSVG (94 aa)) the chain is Periplasmic.

Belongs to the MzrA family. In terms of assembly, interacts with EnvZ.

The protein resides in the cell inner membrane. Its function is as follows. Modulates the activity of the EnvZ/OmpR two-component regulatory system, probably by directly modulating EnvZ enzymatic activity and increasing stability of phosphorylated OmpR. This is Modulator protein MzrA from Erwinia billingiae (strain Eb661).